Reading from the N-terminus, the 147-residue chain is Cytochrome c-type biogenesis protein CcmE (147 aa).

At 1–7 (MTVRQRR) the chain is on the cytoplasmic side. Residues 8–28 (FAMVILVVIGVSIATGLGLKA) form a helical; Signal-anchor for type II membrane protein membrane-spanning segment. Over 29-147 (FQENILFFYN…KTKANTEDKL (119 aa)) the chain is Periplasmic. Residues His-123 and Tyr-127 each contribute to the heme site.

This sequence belongs to the CcmE/CycJ family.

The protein localises to the cell inner membrane. Its function is as follows. Heme chaperone required for the biogenesis of c-type cytochromes. Transiently binds heme delivered by CcmC and transfers the heme to apo-cytochromes in a process facilitated by CcmF and CcmH. This is Cytochrome c-type biogenesis protein CcmE from Nitrosococcus oceani (strain ATCC 19707 / BCRC 17464 / JCM 30415 / NCIMB 11848 / C-107).